A 677-amino-acid polypeptide reads, in one-letter code: DNA ligase (677 aa).

Residues 38–42 (DSVYD), 87–88 (SL), and glutamate 119 contribute to the NAD(+) site. Residue lysine 121 is the N6-AMP-lysine intermediate of the active site. Positions 142, 179, 296, and 320 each coordinate NAD(+). Residues cysteine 414, cysteine 417, cysteine 432, and cysteine 438 each contribute to the Zn(2+) site. The region spanning 595-677 (VVKSEIAGKT…LKLLKSKGVF (83 aa)) is the BRCT domain.

The protein belongs to the NAD-dependent DNA ligase family. LigA subfamily. The cofactor is Mg(2+). Requires Mn(2+) as cofactor.

The catalysed reaction is NAD(+) + (deoxyribonucleotide)n-3'-hydroxyl + 5'-phospho-(deoxyribonucleotide)m = (deoxyribonucleotide)n+m + AMP + beta-nicotinamide D-nucleotide.. Functionally, DNA ligase that catalyzes the formation of phosphodiester linkages between 5'-phosphoryl and 3'-hydroxyl groups in double-stranded DNA using NAD as a coenzyme and as the energy source for the reaction. It is essential for DNA replication and repair of damaged DNA. The sequence is that of DNA ligase from Coxiella burnetii (strain CbuG_Q212) (Coxiella burnetii (strain Q212)).